We begin with the raw amino-acid sequence, 797 residues long: MTRSASATAGLTDAEVAQRVAEGKSNDIPERVTRTVGQIVRANVFTRINAILGVLLLIVLATGSLINGMFGLLIIANSVIGMVQEIRAKQTLDKLAIIGQAKPLVRRQSGTRTRSTNEVVLDDIIELGPGDQVVVDGEVVEEENLEIDESLLTGEADPIAKDAGDTVMSGSFVVSGAGAYRATKVGSEAYAAKLAAEASKFTLVKSELRNGINRILQFITYLLVPAGLLTIYTQLFTTHVGWRESVLRMVGALVPMVPEGLVLMTSIAFAVGVVRLGQRQCLVQELPAIEGLARVDVVCADKTGTLTESGMRVCEVEELDGAGRQESVADVLAALAAADARPNASMQAIAEAFHSPPGWVVAANAPFKSATKWSGVSFRDHGNWVIGAPDVLLDPASVAARQAERIGAQGLRVLLLAAGSVAVDHAQAPGQVTPVALVVLEQKVRPDARETLDYFAVQNVSVKVISGDNAVSVGAVADRLGLHGEAMDARALPTGREELADTLDSYTSFGRVRPDQKRAIVHALQSHGHTVAMTGDGVNDVLALKDADIGVAMGSGSPASRAVAQIVLLNNRFATLPHVVGEGRRVIGNIERVANLFLTKTVYSVLLALLVGIECLIAIPLRRDPLLFPFQPIHVTIAAWFTIGIPAFILSLAPNNERAYPGFVRRVMTSAVPFGLVIGVATFVTYLAAYQGRYASWQEQEQASTAALITLLMTALWVLAVIARPYQWWRLALVLPSGLAYVVIFSLPLAREKFLLDASNLATTSIALAVGVVGAATIEAMWWIRSRMLGVKPRVWR.

3 helical membrane passes run 55 to 75 (LLLIVLATGSLINGMFGLLII), 215 to 235 (ILQFITYLLVPAGLLTIYTQL), and 254 to 274 (VPMVPEGLVLMTSIAFAVGVV). Asp301 serves as the catalytic 4-aspartylphosphate intermediate. Positions 301, 303, and 536 each coordinate Mg(2+). 6 helical membrane passes run 601 to 621 (TVYSVLLALLVGIECLIAIPL), 633 to 653 (IHVTIAAWFTIGIPAFILSLA), 667 to 687 (VMTSAVPFGLVIGVATFVTYL), 703 to 723 (ASTAALITLLMTALWVLAVIA), 729 to 749 (WRLALVLPSGLAYVVIFSLPL), and 764 to 784 (TSIALAVGVVGAATIEAMWWI).

Belongs to the cation transport ATPase (P-type) (TC 3.A.3) family.

The protein localises to the cell membrane. It catalyses the reaction Ca(2+)(in) + ATP + H2O = Ca(2+)(out) + ADP + phosphate + H(+). P-type ATPase involved in specific uptake of calcium. In Mycobacterium tuberculosis (strain CDC 1551 / Oshkosh), this protein is Calcium-transporting ATPase CtpE (ctpE).